The primary structure comprises 203 residues: Dephospho-CoA kinase (203 aa).

The DPCK domain occupies Val4–Glu203. Ala12–Thr17 contributes to the ATP binding site.

It belongs to the CoaE family.

The protein localises to the cytoplasm. The catalysed reaction is 3'-dephospho-CoA + ATP = ADP + CoA + H(+). It participates in cofactor biosynthesis; coenzyme A biosynthesis; CoA from (R)-pantothenate: step 5/5. Its function is as follows. Catalyzes the phosphorylation of the 3'-hydroxyl group of dephosphocoenzyme A to form coenzyme A. In Staphylococcus epidermidis (strain ATCC 12228 / FDA PCI 1200), this protein is Dephospho-CoA kinase.